The primary structure comprises 132 residues: Dormancy-associated protein 1 (132 aa).

Positions 53-76 are disordered; the sequence is MPAAVSPGTPTTPTTPTTPRKDNV. The span at 61-70 shows a compositional bias: low complexity; that stretch reads TPTTPTTPTT. Thr-64 is modified (phosphothreonine).

Belongs to the DRM1/ARP family. Isoform 1: Expressed mainly in the low bolt. Isoform 2: Expressed mainly in the low bolt. Detected in flowers. Isoform 4: Expressed mainly in the low bolt. Isoform 5: Expressed mainly in the 6 days old seedlings. Detected in 16 days old seedlings, axil, low bolt and floral samples, but only barely in leaves and top bolt.

The sequence is that of Dormancy-associated protein 1 from Arabidopsis thaliana (Mouse-ear cress).